The primary structure comprises 32 residues: Photosystem II reaction center protein T (32 aa).

Residues Ala3–Phe23 traverse the membrane as a helical segment.

It belongs to the PsbT family. PSII is composed of 1 copy each of membrane proteins PsbA, PsbB, PsbC, PsbD, PsbE, PsbF, PsbH, PsbI, PsbJ, PsbK, PsbL, PsbM, PsbT, PsbX, PsbY, PsbZ, Psb30/Ycf12, peripheral proteins PsbO, CyanoQ (PsbQ), PsbU, PsbV and a large number of cofactors. It forms dimeric complexes.

It localises to the cellular thylakoid membrane. Functionally, found at the monomer-monomer interface of the photosystem II (PS II) dimer, plays a role in assembly and dimerization of PSII. PSII is a light-driven water plastoquinone oxidoreductase, using light energy to abstract electrons from H(2)O, generating a proton gradient subsequently used for ATP formation. The sequence is that of Photosystem II reaction center protein T from Synechococcus sp. (strain JA-2-3B'a(2-13)) (Cyanobacteria bacterium Yellowstone B-Prime).